The chain runs to 256 residues: Thiazole synthase (256 aa).

K95 serves as the catalytic Schiff-base intermediate with DXP. Residues G156, 182 to 183 (AG), and 204 to 205 (NT) contribute to the 1-deoxy-D-xylulose 5-phosphate site.

Belongs to the ThiG family. As to quaternary structure, homotetramer. Forms heterodimers with either ThiH or ThiS.

The protein resides in the cytoplasm. It catalyses the reaction [ThiS sulfur-carrier protein]-C-terminal-Gly-aminoethanethioate + 2-iminoacetate + 1-deoxy-D-xylulose 5-phosphate = [ThiS sulfur-carrier protein]-C-terminal Gly-Gly + 2-[(2R,5Z)-2-carboxy-4-methylthiazol-5(2H)-ylidene]ethyl phosphate + 2 H2O + H(+). Its pathway is cofactor biosynthesis; thiamine diphosphate biosynthesis. Its function is as follows. Catalyzes the rearrangement of 1-deoxy-D-xylulose 5-phosphate (DXP) to produce the thiazole phosphate moiety of thiamine. Sulfur is provided by the thiocarboxylate moiety of the carrier protein ThiS. In vitro, sulfur can be provided by H(2)S. The polypeptide is Thiazole synthase (Escherichia coli O6:H1 (strain CFT073 / ATCC 700928 / UPEC)).